Reading from the N-terminus, the 254-residue chain is MAVTDVFARRATLRRSLRLLADFRYEQRDPARFYRTLAADTAAMIGDLWLATHSEPPVGRTLLDVGGGPGYFATAFSDAGVGYIGVEPDPDEMHAAGPAFTGRPGMFVRASGMALPLADDSVDICLSSNVAEHVPRPWQLGTEMLRVTKPGGLVVLSYTVWLGPFGGHEMGLSHYLGGARAAARYVRKHGHPAKNNYGSSLFAVSAAEGLRWAAGTGAALAVFPRYHPRWAWWLTSVPVLREFLVSNLVLVLTP.

Belongs to the methyltransferase superfamily.

This is an uncharacterized protein from Mycobacterium bovis (strain ATCC BAA-935 / AF2122/97).